The following is a 253-amino-acid chain: Ditrans,polycis-undecaprenyl-diphosphate synthase ((2E,6E)-farnesyl-diphosphate specific) (253 aa).

Residue D25 is part of the active site. D25 provides a ligand contact to Mg(2+). Substrate is bound by residues 26–29, W30, R38, H42, and 70–72; these read GNGR and SSE. N73 serves as the catalytic Proton acceptor. Residues W74, R76, and R193 each contribute to the substrate site. H198 is a binding site for Mg(2+). Residue 199–201 coordinates substrate; sequence RIS. E212 contacts Mg(2+).

It belongs to the UPP synthase family. Homodimer. Mg(2+) is required as a cofactor.

It catalyses the reaction 8 isopentenyl diphosphate + (2E,6E)-farnesyl diphosphate = di-trans,octa-cis-undecaprenyl diphosphate + 8 diphosphate. Functionally, catalyzes the sequential condensation of isopentenyl diphosphate (IPP) with (2E,6E)-farnesyl diphosphate (E,E-FPP) to yield (2Z,6Z,10Z,14Z,18Z,22Z,26Z,30Z,34E,38E)-undecaprenyl diphosphate (di-trans,octa-cis-UPP). UPP is the precursor of glycosyl carrier lipid in the biosynthesis of bacterial cell wall polysaccharide components such as peptidoglycan and lipopolysaccharide. The sequence is that of Ditrans,polycis-undecaprenyl-diphosphate synthase ((2E,6E)-farnesyl-diphosphate specific) from Pectobacterium atrosepticum (strain SCRI 1043 / ATCC BAA-672) (Erwinia carotovora subsp. atroseptica).